Here is a 287-residue protein sequence, read N- to C-terminus: Large ribosomal subunit protein uL3 (287 aa).

The interval 228–287 (KAPEAKPAKLSKKKQAKELAKAQAANQQTVEAKVDTPVVEPKPTEVKKAAPVVEKKGEDK) is disordered. The span at 269–287 (KPTEVKKAAPVVEKKGEDK) shows a compositional bias: basic and acidic residues.

The protein belongs to the universal ribosomal protein uL3 family. In terms of assembly, part of the 50S ribosomal subunit. Forms a cluster with proteins L14 and L19.

Functionally, one of the primary rRNA binding proteins, it binds directly near the 3'-end of the 23S rRNA, where it nucleates assembly of the 50S subunit. The chain is Large ribosomal subunit protein uL3 from Mycoplasma pneumoniae (strain ATCC 29342 / M129 / Subtype 1) (Mycoplasmoides pneumoniae).